We begin with the raw amino-acid sequence, 365 residues long: Short-chain dehydrogenase iccH (365 aa).

L16, R52, and D70 together coordinate NADP(+). N90 carries an N-linked (GlcNAc...) asparagine glycan. NADP(+)-binding residues include N102, Y221, K225, and S260. The Proton donor role is filled by Y221. The Lowers pKa of active site Tyr role is filled by K225. A helical transmembrane segment spans residues 267–287 (IWVMFLLMKFVLPLLAPLAVW). 2 N-linked (GlcNAc...) asparagine glycosylation sites follow: N291 and N324.

It belongs to the short-chain dehydrogenases/reductases (SDR) family.

Its subcellular location is the membrane. The protein operates within mycotoxin biosynthesis. Functionally, NADH-dependent flavin oxidoreductase; part of the gene cluster that mediates the biosynthesis of ilicicolin H, a 4-hydroxy-2-pyridonealkaloid that has potent and broad antifungal activities by inhibiting the mitochondrial respiration chain. IccA to iccE are sufficient for ilicicolin H biosynthesis and the roles of the remaining enzymes, iccF, iccG and iccH within the pathway have still to be determined. The biosynthesis of ilicicolin H starts with formation of the tetramic acid by the hybrid PKS-NRPS synthetase iccA with the partnering trans-enoyl reductase iccB since iccA lacks a designated enoylreductase (ER) domain. The cytochrome P450 monooxygenase iccC then catalyzes the ring expansion of the tetramate to the acyclic 2-pyridone. The pericyclase iccD further converts the acyclic 2-pyridone into 8-epi-ilicicolin H. Finally, the epimerase iccE converts 8-epi-ilicicolin H into ilicicolin H via epimerizationd. This chain is Short-chain dehydrogenase iccH, found in Talaromyces variabilis (Penicillium variabile).